The chain runs to 142 residues: Nucleoside diphosphate kinase (142 aa).

The ATP site is built by Lys-11, Phe-59, Arg-87, Thr-93, Arg-104, and Asn-114. His-117 acts as the Pros-phosphohistidine intermediate in catalysis.

This sequence belongs to the NDK family. In terms of assembly, homotetramer. Mg(2+) is required as a cofactor.

Its subcellular location is the cytoplasm. It catalyses the reaction a 2'-deoxyribonucleoside 5'-diphosphate + ATP = a 2'-deoxyribonucleoside 5'-triphosphate + ADP. The catalysed reaction is a ribonucleoside 5'-diphosphate + ATP = a ribonucleoside 5'-triphosphate + ADP. Major role in the synthesis of nucleoside triphosphates other than ATP. The ATP gamma phosphate is transferred to the NDP beta phosphate via a ping-pong mechanism, using a phosphorylated active-site intermediate. The polypeptide is Nucleoside diphosphate kinase (Hahella chejuensis (strain KCTC 2396)).